Reading from the N-terminus, the 45-residue chain is MTKRTFGGTSRKRKRVSGFRVRMRTHTGRSVIRSRRKKGRSRIAV.

The interval 1-45 is disordered; that stretch reads MTKRTFGGTSRKRKRVSGFRVRMRTHTGRSVIRSRRKKGRSRIAV. The span at 10–45 shows a compositional bias: basic residues; that stretch reads SRKRKRVSGFRVRMRTHTGRSVIRSRRKKGRSRIAV.

The protein belongs to the bacterial ribosomal protein bL34 family.

This is Large ribosomal subunit protein bL34 from Prochlorococcus marinus (strain SARG / CCMP1375 / SS120).